A 521-amino-acid chain; its full sequence is GMP synthase [glutamine-hydrolyzing] (521 aa).

Positions 10–204 constitute a Glutamine amidotransferase type-1 domain; the sequence is SLLILDFGSQ…ALGICGCEND (195 aa). Cys87 acts as the Nucleophile in catalysis. Active-site residues include His178 and Glu180. The GMPS ATP-PPase domain maps to 205 to 396; sequence WNMHNFAEEQ…LGMPREMLMR (192 aa). 232–238 serves as a coordination point for ATP; that stretch reads SGGVDSS.

In terms of assembly, homodimer.

The catalysed reaction is XMP + L-glutamine + ATP + H2O = GMP + L-glutamate + AMP + diphosphate + 2 H(+). It participates in purine metabolism; GMP biosynthesis; GMP from XMP (L-Gln route): step 1/1. Its function is as follows. Catalyzes the synthesis of GMP from XMP. The protein is GMP synthase [glutamine-hydrolyzing] of Wolinella succinogenes (strain ATCC 29543 / DSM 1740 / CCUG 13145 / JCM 31913 / LMG 7466 / NCTC 11488 / FDC 602W) (Vibrio succinogenes).